Reading from the N-terminus, the 126-residue chain is Topoisomerase I damage affected protein 2 (126 aa).

Position 2 is an N-acetylserine (serine 2).

Belongs to the TDA2 family.

The protein localises to the cytoplasm. It is found in the cell projection. In Saccharomyces cerevisiae (strain JAY291) (Baker's yeast), this protein is Topoisomerase I damage affected protein 2 (TDA2).